Here is a 104-residue protein sequence, read N- to C-terminus: Protein SMALL AUXIN UP-REGULATED RNA 9 (104 aa).

The protein belongs to the ARG7 family. In terms of assembly, interacts with and inhibits PP2C-D subfamily of type 2C phosphatases such as PP2C67/PP2C-D1. Expressed in etiolated hypocotyls, petioles, leaves and flowers.

It localises to the cell membrane. In terms of biological role, provide a mechanistic link between auxin and plasma membrane H(+)-ATPases (PM H(+)-ATPases, e.g. AHA1 and AHA2), and triggers PM H(+)-ATPases activity by promoting phosphorylation of their C-terminal autoinhibitory domain as a result of PP2C-D subfamily of type 2C phosphatases inhibition, thus leading to the acidification of the apoplast and the facilitation of solutes and water uptake to drive cell expansion. Triggers plant growth probably by promoting cell elongation. Regulates branch angles and bending. Probably involved in light intensity mediated root development. The polypeptide is Protein SMALL AUXIN UP-REGULATED RNA 9 (Arabidopsis thaliana (Mouse-ear cress)).